We begin with the raw amino-acid sequence, 484 residues long: Probable efflux pump outer membrane protein TtgC (484 aa).

An N-terminal signal peptide occupies residues Met-1–Gly-17. Cys-18 carries N-palmitoyl cysteine lipidation. Cys-18 is lipidated: S-diacylglycerol cysteine.

The protein belongs to the outer membrane factor (OMF) (TC 1.B.17) family.

The protein localises to the cell outer membrane. Its function is as follows. Probable outer membrane component of the TtgABC efflux pump with unknown specificity. The sequence is that of Probable efflux pump outer membrane protein TtgC (ttgC) from Pseudomonas putida (strain ATCC 47054 / DSM 6125 / CFBP 8728 / NCIMB 11950 / KT2440).